The sequence spans 149 residues: Calmodulin-2 (149 aa).

An N-acetylalanine modification is found at alanine 2. EF-hand domains lie at 8-43 (EQIAEFKEAFSLFDKDGDGCITTKELGTVMRSLGQN), 44-79 (PTEAELQDMINEVDADGNGTIDFPEFLNLMAKKMKD), 81-116 (DSEEELKEAFRVFDKDQNGFISAAELRHVMTNLGEK), and 117-149 (LTDEEVDEMIREADVDGDGQINYEEFVKVMMAK). The Ca(2+) site is built by aspartate 21, aspartate 23, aspartate 25, cysteine 27, glutamate 32, aspartate 57, aspartate 59, asparagine 61, threonine 63, glutamate 68, aspartate 94, aspartate 96, asparagine 98, and glutamate 105. An N6,N6,N6-trimethyllysine modification is found at lysine 116. Residues aspartate 130, aspartate 132, aspartate 134, glutamine 136, and glutamate 141 each contribute to the Ca(2+) site.

Belongs to the calmodulin family.

In terms of biological role, calmodulin mediates the control of a large number of enzymes, ion channels and other proteins by Ca(2+). Among the enzymes to be stimulated by the calmodulin-Ca(2+) complex are a number of protein kinases and phosphatases. This Oryza sativa subsp. indica (Rice) protein is Calmodulin-2 (CAM2).